The chain runs to 388 residues: 5-hydroxytryptamine receptor 1B (388 aa).

A disordered region spans residues 1-29 (MEQPSRLCSPPASGSLTSSQTNHSTFPNP). Over 1–45 (MEQPSRLCSPPASGSLTSSQTNHSTFPNPNCSAPDLEPYQDSIAL) the chain is Extracellular. Polar residues predominate over residues 12 to 29 (ASGSLTSSQTNHSTFPNP). N-linked (GlcNAc...) asparagine glycans are attached at residues asparagine 22 and asparagine 30. Residues 46–71 (PWKVLLATFLGLITLGTTLSNAFVIA) form a helical membrane-spanning segment. At 72–85 (TVSRTRKLHTPANY) the chain is on the cytoplasmic side. A helical transmembrane segment spans residues 86–110 (LIASLAVTDLLVSILVMPISTMYTV). Over 111–118 (TGRWTLGQ) the chain is Extracellular. The chain crosses the membrane as a helical span at residues 119 to 144 (VVCDFWLSSDITCCTASILHLCVIAL). Cysteine 121 and cysteine 197 are joined by a disulfide. The ergotamine site is built by aspartate 128 and threonine 133. Residues 145-147 (DRY) carry the DRY motif; important for ligand-induced conformation changes and signaling motif. The Cytoplasmic portion of the chain corresponds to 145–164 (DRYWAITDAVEYSAKRTPKR). The helical transmembrane segment at 165 to 183 (AAGMIIMVWVFSVSISMPP) threads the bilayer. Over 184-203 (LFWRQAKAEEVADCSVNTDH) the chain is Extracellular. Valine 199 lines the ergotamine pocket. The chain crosses the membrane as a helical span at residues 204-227 (ILYTVYSTVGAFYFPTLLLIALYG). The Cytoplasmic portion of the chain corresponds to 228–313 (RIYVEARSRI…AARERKATRT (86 aa)). The disordered stretch occupies residues 249–282 (LTRAQLITDSPGSSSSGTSINSRAPEGPSESGSP). The span at 255 to 270 (ITDSPGSSSSGTSINS) shows a compositional bias: low complexity. Residues 314–335 (LGIILGAFIVCWLPFFIISLAL) traverse the membrane as a helical segment. The Extracellular portion of the chain corresponds to 336 to 345 (PICDDACWFH). A helical transmembrane segment spans residues 346–368 (LAIFDFFNWLGYLNSLINPIIYT). Positions 363-367 (NPIIY) match the NPxxY motif; important for ligand-induced conformation changes and signaling motif. Residues 369–388 (KSNDDFKQAFQKLMRFRRTS) are Cytoplasmic-facing.

Belongs to the G-protein coupled receptor 1 family. As to quaternary structure, homodimer. Heterodimer with HTR1D. Post-translationally, phosphorylated. Desensitization of the receptor may be mediated by its phosphorylation. In terms of processing, palmitoylated.

It is found in the cell membrane. G-protein coupled receptor for 5-hydroxytryptamine (serotonin). Also functions as a receptor for ergot alkaloid derivatives, various anxiolytic and antidepressant drugs and other psychoactive substances, such as lysergic acid diethylamide (LSD). Ligand binding causes a conformation change that triggers signaling via guanine nucleotide-binding proteins (G proteins) and modulates the activity of downstream effectors, such as adenylate cyclase. HTR1B is coupled to G(i)/G(o) G alpha proteins and mediates inhibitory neurotransmission by inhibiting adenylate cyclase activity. Arrestin family members inhibit signaling via G proteins and mediate activation of alternative signaling pathways. Regulates the release of 5-hydroxytryptamine, dopamine and acetylcholine in the brain, and thereby affects neural activity, nociceptive processing, pain perception, mood and behavior. Besides, plays a role in vasoconstriction of cerebral arteries. The polypeptide is 5-hydroxytryptamine receptor 1B (HTR1B) (Didelphis virginiana (North American opossum)).